Reading from the N-terminus, the 232-residue chain is NAD(P)H-quinone oxidoreductase subunit K 1 (232 aa).

[4Fe-4S] cluster-binding residues include Cys49, Cys50, Cys114, and Cys145.

Belongs to the complex I 20 kDa subunit family. In terms of assembly, NDH-1 can be composed of about 15 different subunits; different subcomplexes with different compositions have been identified which probably have different functions. [4Fe-4S] cluster serves as cofactor.

It localises to the cell inner membrane. The catalysed reaction is a plastoquinone + NADH + (n+1) H(+)(in) = a plastoquinol + NAD(+) + n H(+)(out). It catalyses the reaction a plastoquinone + NADPH + (n+1) H(+)(in) = a plastoquinol + NADP(+) + n H(+)(out). Its function is as follows. NDH-1 shuttles electrons from an unknown electron donor, via FMN and iron-sulfur (Fe-S) centers, to quinones in the respiratory and/or the photosynthetic chain. The immediate electron acceptor for the enzyme in this species is believed to be plastoquinone. Couples the redox reaction to proton translocation, and thus conserves the redox energy in a proton gradient. Cyanobacterial NDH-1 also plays a role in inorganic carbon-concentration. In Gloeobacter violaceus (strain ATCC 29082 / PCC 7421), this protein is NAD(P)H-quinone oxidoreductase subunit K 1.